Here is a 244-residue protein sequence, read N- to C-terminus: Gas vesicle protein F (244 aa).

The tract at residues methionine 1–serine 109 is N-terminus. Residues glycine 110–asparagine 233 form a C-terminus, modifed ferredoxin fold region. The tract at residues leucine 234 to isoleucine 244 is C-tail.

This sequence belongs to the gas vesicle GvpF/GvpL family. Binds GvpA.

Its subcellular location is the gas vesicle. In terms of biological role, a minor component of the gas vesicle, may be involved in preventing GvpA aggregation during gas vesicle nucleation. Gas vesicles (GV) are hollow, gas filled proteinaceous nanostructures. During planktonic growth they allow positioning of the organism at a favorable depth for light or nutrient acquisition. The chain is Gas vesicle protein F from Microcystis aeruginosa (strain PCC 7806).